The sequence spans 320 residues: Ferrochelatase (320 aa).

Fe cation contacts are provided by His-194 and Glu-275.

The protein belongs to the ferrochelatase family. As to quaternary structure, monomer.

It localises to the cytoplasm. It carries out the reaction heme b + 2 H(+) = protoporphyrin IX + Fe(2+). It functions in the pathway porphyrin-containing compound metabolism; protoheme biosynthesis; protoheme from protoporphyrin-IX: step 1/1. Catalyzes the ferrous insertion into protoporphyrin IX. The polypeptide is Ferrochelatase (Escherichia coli (strain 55989 / EAEC)).